The chain runs to 153 residues: 3-hydroxyacyl-[acyl-carrier-protein] dehydratase FabZ (153 aa).

His54 is an active-site residue.

The protein belongs to the thioester dehydratase family. FabZ subfamily.

The protein resides in the cytoplasm. The catalysed reaction is a (3R)-hydroxyacyl-[ACP] = a (2E)-enoyl-[ACP] + H2O. Its function is as follows. Involved in unsaturated fatty acids biosynthesis. Catalyzes the dehydration of short chain beta-hydroxyacyl-ACPs and long chain saturated and unsaturated beta-hydroxyacyl-ACPs. The polypeptide is 3-hydroxyacyl-[acyl-carrier-protein] dehydratase FabZ (Chlamydia pneumoniae (Chlamydophila pneumoniae)).